The sequence spans 244 residues: Flavin-dependent thymidylate synthase (244 aa).

A ThyX domain is found at 7–199 (PRVFLIASWG…PNLARLVWED (193 aa)). Residues Ser-60 and 83–85 (RHR) each bind FAD. DUMP-binding positions include 80–83 (QFIR), 93–95 (SQR), and Arg-137. The short motif at 83 to 93 (RHRMASYWSES) is the ThyX motif element. FAD is bound by residues 153 to 155 (NAR) and Asn-160. Residue Arg-165 coordinates dUMP. Arg-165 acts as the Involved in ionization of N3 of dUMP, leading to its activation in catalysis.

This sequence belongs to the thymidylate synthase ThyX family. As to quaternary structure, homotetramer. FAD is required as a cofactor.

It catalyses the reaction dUMP + (6R)-5,10-methylene-5,6,7,8-tetrahydrofolate + NADPH + H(+) = dTMP + (6S)-5,6,7,8-tetrahydrofolate + NADP(+). Its pathway is pyrimidine metabolism; dTTP biosynthesis. Catalyzes the reductive methylation of 2'-deoxyuridine-5'-monophosphate (dUMP) to 2'-deoxythymidine-5'-monophosphate (dTMP) while utilizing 5,10-methylenetetrahydrofolate (mTHF) as the methyl donor, and NADPH and FADH(2) as the reductant. The polypeptide is Flavin-dependent thymidylate synthase (Pyrobaculum aerophilum (strain ATCC 51768 / DSM 7523 / JCM 9630 / CIP 104966 / NBRC 100827 / IM2)).